A 352-amino-acid chain; its full sequence is Protein CIA1 (352 aa).

WD repeat units follow at residues 18–64 (GHTD…RSWT), 72–111 (THTRTVRSCAWSPSGQLLATASFDGTTGIWKNYGSEFECI), 116–155 (GHENEVKSVSWNASGSCLATCSRDKSVWIWEVLEGNEYDC), 161–200 (GHTQDVKMVQWHPTMDVLFSCSYDNTIKVWWSEDDDGEYQ), 211–250 (GHSSTVWSISFNAAGDKMVTCSDDLTLKIWGTDIAKMQSG), 265–303 (YHDRTIYSAHWSRDDIIASGAGDNAIRLFVDSKHDSVDG), and 315–352 (AHENDVNSVQWSPGEGNRLLASASDDGMVKIWQLATKP).

It belongs to the WD repeat CIA1 family. In terms of assembly, part of a complex composed of AE7, CIA1, MMS19 and NAR1. Interacts with AE7 and NAR1.

It localises to the nucleus. The protein localises to the cytoplasm. In terms of biological role, essential component of the cytosolic iron-sulfur (Fe-S) protein assembly (CIA) machinery. Required for the maturation of extramitochondrial Fe/S proteins. This chain is Protein CIA1, found in Arabidopsis thaliana (Mouse-ear cress).